A 686-amino-acid polypeptide reads, in one-letter code: Polyribonucleotide nucleotidyltransferase (686 aa).

The Mg(2+) site is built by Asp478 and Asp484. A KH domain is found at 545–604 (PRVEVIQIPTDKIGLLIGPGGKTINALQDEYGVNISVENDGTVYVAGVEGMSVKAAVSAI). The S1 motif domain occupies 614-684 (GDIYVGKVVK…KQNRISLEMV (71 aa)).

Belongs to the polyribonucleotide nucleotidyltransferase family. Requires Mg(2+) as cofactor.

It is found in the cytoplasm. It catalyses the reaction RNA(n+1) + phosphate = RNA(n) + a ribonucleoside 5'-diphosphate. Involved in mRNA degradation. Catalyzes the phosphorolysis of single-stranded polyribonucleotides processively in the 3'- to 5'-direction. The chain is Polyribonucleotide nucleotidyltransferase from Rubrobacter xylanophilus (strain DSM 9941 / JCM 11954 / NBRC 16129 / PRD-1).